Reading from the N-terminus, the 1488-residue chain is Chromosome partition protein MukB (1488 aa).

34 to 41 (GGNGAGKS) is a binding site for ATP. 3 coiled-coil regions span residues 326–418 (LEAD…QYNQ), 444–472 (LDTF…QTAH), and 509–602 (RHLA…RRAP). Residues 666 to 783 (PGGAEDQRLN…SLPIFGRAAR (118 aa)) form a flexible hinge region. Coiled-coil stretches lie at residues 835-923 (EAEI…AKLE), 977-1116 (EMLS…AKAG), and 1209-1265 (VEAI…LQSV). The interval 1049–1074 (ADSGAEERARQRRDELHAQLSNNRSR) is disordered. The span at 1051–1065 (SGAEERARQRRDELH) shows a compositional bias: basic and acidic residues.

It belongs to the SMC family. MukB subfamily. In terms of assembly, homodimerization via its hinge domain. Binds to DNA via its C-terminal region. Interacts, and probably forms a ternary complex, with MukE and MukF via its C-terminal region. The complex formation is stimulated by calcium or magnesium. Interacts with tubulin-related protein FtsZ.

Its subcellular location is the cytoplasm. The protein resides in the nucleoid. In terms of biological role, plays a central role in chromosome condensation, segregation and cell cycle progression. Functions as a homodimer, which is essential for chromosome partition. Involved in negative DNA supercoiling in vivo, and by this means organize and compact chromosomes. May achieve or facilitate chromosome segregation by condensation DNA from both sides of a centrally located replisome during cell division. The chain is Chromosome partition protein MukB from Salmonella heidelberg (strain SL476).